We begin with the raw amino-acid sequence, 46 residues long: Myoregulin (46 aa).

At 1-21 (MSGKSWVLISTTSPQSLEDEI) the chain is on the cytoplasmic side. A helical transmembrane segment spans residues 22 to 42 (LGRLLKILFVLFVDLMSIMYV). At 43–46 (VITS) the chain is on the lumenal side.

In terms of assembly, homooligomer. Monomer. Interacts with ATP2A1/SERCA1. Interacts as a monomer with ATP2A2/SERCA2; the interaction inhibits ATP2A2 activity. As to expression, specifically expressed in all skeletal muscles. Detected in both fast- and slow-type skeletal muscle. Not expressed in cardiac or smooth muscles.

The protein localises to the sarcoplasmic reticulum membrane. Functionally, inhibits the activity of ATP2A1/SERCA1 ATPase in sarcoplasmic reticulum by decreasing the apparent affinity of the ATPase for Ca(2+), thereby acting as a key regulator of skeletal muscle activity. Its high expression in adult skeletal muscle, suggests that it constitutes the predominant regulator of ATP2A1/SERCA1 in adult skeletal muscle. Also inhibits the activity of ATP2A2/SERCA2 and ATP2A3/SERCA3. The polypeptide is Myoregulin (Mus musculus (Mouse)).